Consider the following 393-residue polypeptide: Lysine/ornithine decarboxylase (393 aa).

An N6-(pyridoxal phosphate)lysine modification is found at Lys-51. The Proton donor; shared with dimeric partner role is filled by Cys-323.

This sequence belongs to the Orn/Lys/Arg decarboxylase class-II family. As to quaternary structure, homodimer. The cofactor is pyridoxal 5'-phosphate.

The catalysed reaction is L-lysine + H(+) = cadaverine + CO2. It carries out the reaction L-ornithine + H(+) = putrescine + CO2. Its pathway is amine and polyamine biosynthesis; putrescine biosynthesis via L-ornithine pathway; putrescine from L-ornithine: step 1/1. With respect to regulation, inhibited competitively by both alpha-difluoromethyllysine and alpha-difluoromethylornithine. Its function is as follows. Decarboxylates both L-lysine and L-ornithine with similar catalytic efficiency. The protein is Lysine/ornithine decarboxylase (ldc) of Selenomonas ruminantium.